The primary structure comprises 398 residues: Cytochrome b (398 aa).

The next 4 membrane-spanning stretches (helical) occupy residues 38-58 (FGSL…FLAM), 82-104 (WLLR…LHIF), 119-139 (VWCL…IGYV), and 185-205 (FFSL…LHLA). 2 residues coordinate heme b: H88 and H102. Residues H189 and H203 each coordinate heme b. H208 contacts a ubiquinone. Helical transmembrane passes span 231–251 (FYVK…IWIF), 295–315 (AGGV…PFFK), 327–347 (IYQG…WIGC), and 354–373 (FVTI…AITP).

It belongs to the cytochrome b family. In terms of assembly, the main subunits of complex b-c1 are: cytochrome b, cytochrome c1 and the Rieske protein. The cofactor is heme b.

It localises to the mitochondrion inner membrane. Component of the ubiquinol-cytochrome c reductase complex (complex III or cytochrome b-c1 complex) that is part of the mitochondrial respiratory chain. The b-c1 complex mediates electron transfer from ubiquinol to cytochrome c. Contributes to the generation of a proton gradient across the mitochondrial membrane that is then used for ATP synthesis. The chain is Cytochrome b (MT-CYB) from Triticum aestivum (Wheat).